The following is a 122-amino-acid chain: Small ribosomal subunit protein uS13 (122 aa).

The segment at 96–122 (LPCRGQRTHTNARTRKGPRKPIAGKKK) is disordered.

Belongs to the universal ribosomal protein uS13 family. In terms of assembly, part of the 30S ribosomal subunit. Forms a loose heterodimer with protein S19. Forms two bridges to the 50S subunit in the 70S ribosome.

Located at the top of the head of the 30S subunit, it contacts several helices of the 16S rRNA. In the 70S ribosome it contacts the 23S rRNA (bridge B1a) and protein L5 of the 50S subunit (bridge B1b), connecting the 2 subunits; these bridges are implicated in subunit movement. Contacts the tRNAs in the A and P-sites. The sequence is that of Small ribosomal subunit protein uS13 from Magnetococcus marinus (strain ATCC BAA-1437 / JCM 17883 / MC-1).